Here is a 343-residue protein sequence, read N- to C-terminus: Glyceraldehyde-3-phosphate dehydrogenase (343 aa).

Residues 13–14 and Gly-111 each bind NAD(+); that span reads TI. 140–142 contacts D-glyceraldehyde 3-phosphate; sequence SCN. The active-site Nucleophile is Cys-141. Position 169 (Arg-169) interacts with NAD(+). 195–196 contributes to the D-glyceraldehyde 3-phosphate binding site; the sequence is HA. Gln-302 is an NAD(+) binding site.

The protein belongs to the glyceraldehyde-3-phosphate dehydrogenase family. In terms of assembly, homotetramer.

Its subcellular location is the cytoplasm. It catalyses the reaction D-glyceraldehyde 3-phosphate + phosphate + NADP(+) = (2R)-3-phospho-glyceroyl phosphate + NADPH + H(+). The catalysed reaction is D-glyceraldehyde 3-phosphate + phosphate + NAD(+) = (2R)-3-phospho-glyceroyl phosphate + NADH + H(+). The protein operates within carbohydrate degradation; glycolysis; pyruvate from D-glyceraldehyde 3-phosphate: step 1/5. The sequence is that of Glyceraldehyde-3-phosphate dehydrogenase from Hyperthermus butylicus (strain DSM 5456 / JCM 9403 / PLM1-5).